The chain runs to 481 residues: MFS transporter eqxG (481 aa).

Positions 1 to 13 are enriched in low complexity; sequence MATTDPAIAAPDD. The segment at 1-58 is disordered; that stretch reads MATTDPAIAAPDDSQLEAGRENIRANVGDALEKPSSSTGTMVDEPTDPNVVDWDGPHD. Asparagine 64 is a glycosylation site (N-linked (GlcNAc...) asparagine). Residues 72-92 traverse the membrane as a helical segment; that stretch reads LHLVIVSLFTLAANLAATMFA. The N-linked (GlcNAc...) asparagine glycan is linked to asparagine 106. 10 helical membrane-spanning segments follow: residues 111–131, 146–166, 169–189, 201–221, 276–296, 315–335, 353–373, 380–400, 403–423, and 439–459; these read AMTV…LAPL, FVYV…MFLV, IICG…VADL, LFTV…TVIF, PIVL…FLLF, GLAY…FSVL, LILM…YGWT, WIVP…VVIP, IYLV…ANLL, and LYVS…CLLF.

Belongs to the major facilitator superfamily.

The protein localises to the cell membrane. Its function is as follows. Efflux pump that might be required for efficient secretion of equisetin or other secondary metabolies produced by the equisetin gene cluster. The polypeptide is MFS transporter eqxG (Fusarium heterosporum).